The primary structure comprises 431 residues: Adenylosuccinate synthetase (431 aa).

Residues 13-19 (GDEGKGK) and 41-43 (GHT) each bind GTP. Residue Asp14 is the Proton acceptor of the active site. 2 residues coordinate Mg(2+): Asp14 and Gly41. Residues 14-17 (DEGK), 39-42 (NAGH), Thr130, Arg144, Gln225, Thr240, and Arg304 each bind IMP. Catalysis depends on His42, which acts as the Proton donor. Residue 300-306 (SVTGRPR) participates in substrate binding. Residues Arg306, 332–334 (KLD), and 414–416 (STG) contribute to the GTP site.

It belongs to the adenylosuccinate synthetase family. Homodimer. Mg(2+) is required as a cofactor.

The protein localises to the cytoplasm. It carries out the reaction IMP + L-aspartate + GTP = N(6)-(1,2-dicarboxyethyl)-AMP + GDP + phosphate + 2 H(+). Its pathway is purine metabolism; AMP biosynthesis via de novo pathway; AMP from IMP: step 1/2. Plays an important role in the de novo pathway of purine nucleotide biosynthesis. Catalyzes the first committed step in the biosynthesis of AMP from IMP. The chain is Adenylosuccinate synthetase from Bordetella petrii (strain ATCC BAA-461 / DSM 12804 / CCUG 43448).